The chain runs to 253 residues: Purine nucleoside phosphorylase DR_1966 (253 aa).

The Zn(2+) site is built by histidine 72, cysteine 106, and histidine 123.

This sequence belongs to the purine nucleoside phosphorylase YfiH/LACC1 family. As to quaternary structure, homodimer. The cofactor is Cu(2+). Zn(2+) serves as cofactor.

It carries out the reaction adenosine + phosphate = alpha-D-ribose 1-phosphate + adenine. The catalysed reaction is S-methyl-5'-thioadenosine + phosphate = 5-(methylsulfanyl)-alpha-D-ribose 1-phosphate + adenine. It catalyses the reaction inosine + phosphate = alpha-D-ribose 1-phosphate + hypoxanthine. The enzyme catalyses adenosine + H2O + H(+) = inosine + NH4(+). Its function is as follows. Purine nucleoside enzyme that catalyzes the phosphorolysis of adenosine and inosine nucleosides, yielding D-ribose 1-phosphate and the respective free bases, adenine and hypoxanthine. Also catalyzes the phosphorolysis of S-methyl-5'-thioadenosine into adenine and S-methyl-5-thio-alpha-D-ribose 1-phosphate. Also has adenosine deaminase activity. The polypeptide is Purine nucleoside phosphorylase DR_1966 (Deinococcus radiodurans (strain ATCC 13939 / DSM 20539 / JCM 16871 / CCUG 27074 / LMG 4051 / NBRC 15346 / NCIMB 9279 / VKM B-1422 / R1)).